A 56-amino-acid polypeptide reads, in one-letter code: Large ribosomal subunit protein eL20 (56 aa).

The interval 1 to 24 (MSTYTVRGSFPARDGPQQFEKEVE) is disordered.

The protein belongs to the eukaryotic ribosomal protein eL20 family. As to quaternary structure, part of the 50S ribosomal subunit. Binds 23S rRNA.

The protein is Large ribosomal subunit protein eL20 of Haloarcula marismortui (strain ATCC 43049 / DSM 3752 / JCM 8966 / VKM B-1809) (Halobacterium marismortui).